The following is a 277-amino-acid chain: tRNA uridine(34) hydroxylase (277 aa).

The 96-residue stretch at 126 to 221 folds into the Rhodanese domain; that stretch reads SSPDVHVIDT…YLETMRGDDS (96 aa). The active-site Cysteine persulfide intermediate is cysteine 181.

This sequence belongs to the TrhO family.

The enzyme catalyses uridine(34) in tRNA + AH2 + O2 = 5-hydroxyuridine(34) in tRNA + A + H2O. Catalyzes oxygen-dependent 5-hydroxyuridine (ho5U) modification at position 34 in tRNAs. The chain is tRNA uridine(34) hydroxylase from Anaplasma marginale (strain St. Maries).